The sequence spans 437 residues: Oxysterol-binding protein homolog 7 (437 aa).

Positions I23 to P32 are enriched in polar residues. Residues I23 to E42 form a disordered region. Positions I54 to H393 are OSBP-related domain (ORD). A 1,2-diacyl-sn-glycero-3-phospho-(1D-myo-inositol 4-phosphate) contacts are provided by residues L64–L69, K126–N129, and H157–H158. Residues L64–L69 and N129 contribute to the a 1,2-diacyl-sn-glycero-3-phospho-L-serine site. An a 1,2-diacyl-sn-glycero-3-phospho-L-serine-binding site is contributed by S183. K276 participates in a covalent cross-link: Glycyl lysine isopeptide (Lys-Gly) (interchain with G-Cter in ubiquitin). K351, E355, and R359 together coordinate a 1,2-diacyl-sn-glycero-3-phospho-(1D-myo-inositol 4-phosphate).

It belongs to the OSBP family. As to quaternary structure, interacts with the AAA ATPase VPS4; regulates OSH7 membrane association. VPS4 is required for membrane dissociation of OSH7.

The protein localises to the cytoplasm. The protein resides in the cell membrane. It localises to the endoplasmic reticulum membrane. The enzyme catalyses a 1,2-diacyl-sn-glycero-3-phospho-L-serine(in) = a 1,2-diacyl-sn-glycero-3-phospho-L-serine(out). Ipid transport protein (LTP) involved in non-vesicular transfer of lipids between membranes. Functions in phosphoinositide-coupled directional transport of various lipids by carrying the lipid molecule in a hydrophobic pocket and transferring it between membranes through the cytosol. Involved in maintenance of intracellular sterol distribution and homeostasis. Involved in lipid countertransport between the endoplasmic reticulum and the plasma membrane. Specifically exchanges phosphatidylserine with phosphatidylinositol 4-phosphate (PI4P), delivering phosphatidylserine to the PM in exchange for PI4P, which is delivered to the ER-localized PI4P phosphatase SAC1 for degradation. Thus, by maintaining a PI4P gradient at the ER/PM interface, SAC1 drives PS transport. Binds phosphatidylserine and PI4P in a mutually exclusive manner. The polypeptide is Oxysterol-binding protein homolog 7 (Saccharomyces cerevisiae (strain ATCC 204508 / S288c) (Baker's yeast)).